A 432-amino-acid chain; its full sequence is Hexuronate transporter (432 aa).

An N-terminal signal peptide occupies residues 1–31 (MRKIKGLRWYMIALVTLGTVLGYLTRNTVAA). Topologically, residues 33-48 (APTLMEELNISTQQYS) are periplasmic. A helical membrane pass occupies residues 49-69 (YIIAAYSAAYTVMQPVAGYVL). Residues 70-75 (DVLGTK) lie on the Cytoplasmic side of the membrane. A helical membrane pass occupies residues 76–96 (IGYAMFAVLWAVFCGATALAG). The Periplasmic portion of the chain corresponds to 97–99 (SWG). Residues 100–120 (GLAVARGAVGAAEAAMIPAGL) form a helical membrane-spanning segment. At 121 to 138 (KASSEWFPAKERSIAVGY) the chain is on the cytoplasmic side. The chain crosses the membrane as a helical span at residues 139-159 (FNVGSSIGAMIAPPLVVWAIV). Residues 160 to 164 (MHSWQ) lie on the Periplasmic side of the membrane. Residues 165 to 185 (MAFIISGALSFIWAMAWLIFY) traverse the membrane as a helical segment. The Cytoplasmic portion of the chain corresponds to 186 to 236 (KHPRDQKHLTDEERDYIINGQEAQHQVSTAKKMSVGQILRNRQFWGIALPR). A helical transmembrane segment spans residues 237–257 (FLAEPAWGTFNAWIPLFMFKV). Residues 258-264 (YGFNLKE) are Periplasmic-facing. Residues 265–285 (IAMFAWMPMLFADLGCILGGY) form a helical membrane-spanning segment. At 286 to 293 (LPPLFQRW) the chain is on the cytoplasmic side. The chain crosses the membrane as a helical span at residues 294–314 (FGVNLIVSRKMVVTLGAVLMI). Topologically, residues 315–317 (GPG) are periplasmic. A helical transmembrane segment spans residues 318-338 (MIGLFTNPYVAIMLLCIGGFA). At 339–369 (HQALSGALITLSSDVFGRNEVATANGLTGMS) the chain is on the cytoplasmic side. A helical transmembrane segment spans residues 370 to 390 (AWLASTLFALVVGALADTIGF). Position 391 (serine 391) is a topological domain, periplasmic. A helical membrane pass occupies residues 392-412 (PLFAVLAVFDLLGALVIWTVL). The Cytoplasmic segment spans residues 413 to 432 (QNKPAIEVAQETHNDPAPQH).

The protein belongs to the major facilitator superfamily. Phthalate permease family.

It localises to the cell inner membrane. The catalysed reaction is aldehydo-D-glucuronate(in) + H(+)(in) = aldehydo-D-glucuronate(out) + H(+)(out). The enzyme catalyses aldehydo-D-galacturonate(out) + H(+)(out) = aldehydo-D-galacturonate(in) + H(+)(in). Transport of aldohexuronates such as D-glucuronate and D-galacturonate. In Escherichia coli O157:H7, this protein is Hexuronate transporter (exuT).